Here is a 542-residue protein sequence, read N- to C-terminus: Excitatory amino acid transporter 1 (542 aa).

Residues 1-47 are Cytoplasmic-facing; it reads MTKSNGEEPKMGGRMERFQQGVRKRTLLAKKKVQNITKEDVKSYLFR. Residues 48-68 traverse the membrane as a helical segment; the sequence is NAFVLLTVTAVIVGTILGFTL. Topologically, residues 69–86 are extracellular; the sequence is RPYRMSYREVKYFSFPGE. The chain crosses the membrane as a helical span at residues 87–108; that stretch reads LLMRMLQMLVLPLIISSLVTGM. Residues 109 to 122 lie on the Cytoplasmic side of the membrane; the sequence is AALDSKASGKMGMR. The helical transmembrane segment at 123–145 threads the bilayer; the sequence is AVVYYMTTTIIAVVIGIIIVIII. Topologically, residues 146-236 are extracellular; sequence HPGKGTKENM…ITEELVPVPG (91 aa). Residues 237 to 260 traverse the membrane as a helical segment; the sequence is SVNGVNALGLVVFSMCFGFVIGNM. Residues 261 to 269 lie on the Cytoplasmic side of the membrane; it reads KEQGQALRE. The chain crosses the membrane as a helical span at residues 270–297; the sequence is FFDSLNEAIMRLVAVIMWYAPVGILFLI. Over 298-318 the chain is Extracellular; the sequence is AGKIVEMEDMGVIGGQLAMYT. Residues 319 to 340 form a helical membrane-spanning segment; sequence VTVIVGLLIHAVIVLPLLYFLV. Topologically, residues 341–345 are cytoplasmic; it reads TRKNP. Positions 346–376 form an intramembrane region, discontinuously helical; that stretch reads WVFIGGLLQALITALGTSSSSATLPITFKCL. 363–365 contacts L-aspartate; the sequence is SSS. Residues 377 to 385 lie on the Cytoplasmic side of the membrane; that stretch reads EENNGVDKR. The chain crosses the membrane as a helical span at residues 386 to 412; that stretch reads VTRFVLPVGATINMDGTALYEALAAIF. Gly-394, Thr-396, and Asn-398 together coordinate Na(+). Thr-402 serves as a coordination point for L-aspartate. At 413–425 the chain is on the extracellular side; that stretch reads IAQVNNFELNFGQ. Residues 426–459 constitute an intramembrane region (discontinuously helical); it reads IITISITATAASIGAAGIPQAGLVTMVIVLTSVG. 443–447 contacts L-aspartate; the sequence is IPQAG. The Extracellular segment spans residues 460 to 472; sequence LPTDDITLIIAVD. The helical transmembrane segment at 473–494 threads the bilayer; it reads WFLDRLRTTTNVLGDSLGAGIV. L-aspartate-binding residues include Asp-476 and Asn-483. Residues Asn-483 and Asp-487 each coordinate Na(+). Topologically, residues 495–542 are cytoplasmic; sequence EHLSRHELKNRDVEMGNSVIEENEMKKPYQLIAQDNETEKPIDSETKM. A Phosphoserine modification is found at Ser-512.

Belongs to the dicarboxylate/amino acid:cation symporter (DAACS) (TC 2.A.23) family. SLC1A3 subfamily. In terms of assembly, homotrimer. Post-translationally, glycosylated. As to expression, detected in brain. Detected at very much lower levels in heart, lung, placenta and skeletal muscle. Highly expressed in cerebellum, but also found in frontal cortex, hippocampus and basal ganglia.

It localises to the cell membrane. It catalyses the reaction K(+)(in) + L-glutamate(out) + 3 Na(+)(out) + H(+)(out) = K(+)(out) + L-glutamate(in) + 3 Na(+)(in) + H(+)(in). The enzyme catalyses K(+)(in) + L-aspartate(out) + 3 Na(+)(out) + H(+)(out) = K(+)(out) + L-aspartate(in) + 3 Na(+)(in) + H(+)(in). It carries out the reaction D-aspartate(out) + K(+)(in) + 3 Na(+)(out) + H(+)(out) = D-aspartate(in) + K(+)(out) + 3 Na(+)(in) + H(+)(in). Functionally, sodium-dependent, high-affinity amino acid transporter that mediates the uptake of L-glutamate and also L-aspartate and D-aspartate. Functions as a symporter that transports one amino acid molecule together with two or three Na(+) ions and one proton, in parallel with the counter-transport of one K(+) ion. Mediates Cl(-) flux that is not coupled to amino acid transport; this avoids the accumulation of negative charges due to aspartate and Na(+) symport. Plays a redundant role in the rapid removal of released glutamate from the synaptic cleft, which is essential for terminating the postsynaptic action of glutamate. The polypeptide is Excitatory amino acid transporter 1 (Homo sapiens (Human)).